The sequence spans 388 residues: Chorismate synthase (388 aa).

Residues Arg-39 and Arg-45 each coordinate NADP(+). FMN-binding positions include Arg-130 to Ser-132, Asn-251 to Ala-252, Gly-296, Lys-311 to Thr-315, and Arg-337.

It belongs to the chorismate synthase family. Homotetramer. FMNH2 is required as a cofactor.

It carries out the reaction 5-O-(1-carboxyvinyl)-3-phosphoshikimate = chorismate + phosphate. The protein operates within metabolic intermediate biosynthesis; chorismate biosynthesis; chorismate from D-erythrose 4-phosphate and phosphoenolpyruvate: step 7/7. Its function is as follows. Catalyzes the anti-1,4-elimination of the C-3 phosphate and the C-6 proR hydrogen from 5-enolpyruvylshikimate-3-phosphate (EPSP) to yield chorismate, which is the branch point compound that serves as the starting substrate for the three terminal pathways of aromatic amino acid biosynthesis. This reaction introduces a second double bond into the aromatic ring system. The sequence is that of Chorismate synthase from Streptococcus pneumoniae serotype 19F (strain G54).